We begin with the raw amino-acid sequence, 453 residues long: Trypanin (453 aa).

A compositionally biased stretch (basic and acidic residues) spans 1–10 (MPPRTAAERG). The segment at 1–22 (MPPRTAAERGGRRKSVKAPPPV) is disordered. Coiled coils occupy residues 60-156 (TITK…EMNV) and 185-377 (SCEA…LVEE).

This sequence belongs to the DRC4 family.

It is found in the cytoplasm. The protein localises to the cytoskeleton. Its subcellular location is the cell projection. The protein resides in the cilium. It localises to the flagellum. Cytoskeletal linker that plays a central role in the flagellum cell motility. Required for directional cell motility. Plays a role as part of a dynein regulatory system that regulates flagellar beat in response to signals from the central pair apparatus and radial spokes in procyclic cells. Also plays an essential role in the bloodstream form of the trypanosomes as its silencing is lethal for the circulating form. The protein is Trypanin of Trypanosoma brucei rhodesiense.